The primary structure comprises 81 residues: Putative membrane protein insertion efficiency factor (81 aa).

The tract at residues 61–81 is disordered; that stretch reads NPGGYDPVPPIPTSRSSSMAE.

This sequence belongs to the UPF0161 family.

Its subcellular location is the cell inner membrane. Functionally, could be involved in insertion of integral membrane proteins into the membrane. The chain is Putative membrane protein insertion efficiency factor from Pseudomonas fluorescens (strain Pf0-1).